The sequence spans 168 residues: Peptide deformylase (168 aa).

C92 and H134 together coordinate Fe cation. Residue E135 is part of the active site. Residue H138 coordinates Fe cation.

Belongs to the polypeptide deformylase family. The cofactor is Fe(2+).

It catalyses the reaction N-terminal N-formyl-L-methionyl-[peptide] + H2O = N-terminal L-methionyl-[peptide] + formate. Removes the formyl group from the N-terminal Met of newly synthesized proteins. Requires at least a dipeptide for an efficient rate of reaction. N-terminal L-methionine is a prerequisite for activity but the enzyme has broad specificity at other positions. This is Peptide deformylase from Teredinibacter turnerae (strain ATCC 39867 / T7901).